The sequence spans 480 residues: Alpha-glucosidase (480 aa).

4–70 serves as a coordination point for NAD(+); the sequence is VKIGIIGAGS…ADLKFEKTMN (67 aa). Residues aspartate 119 and asparagine 153 each coordinate substrate. Cysteine 174 contributes to the Mn(2+) binding site. Histidine 175 acts as the Proton donor in catalysis. Histidine 203 contributes to the Mn(2+) binding site. The active-site Proton acceptor is the aspartate 260.

It belongs to the glycosyl hydrolase 4 family. Homodimer. Requires NAD(+) as cofactor. Mn(2+) serves as cofactor. The cofactor is Co(2+). It depends on Ni(2+) as a cofactor.

It carries out the reaction Hydrolysis of terminal, non-reducing (1-&gt;4)-linked alpha-D-glucose residues with release of alpha-D-glucose.. Inhibited by Hg(2+) ion and EDTA. In terms of biological role, alpha-glycosidase with a very broad specificity. Hydrolyzes maltose and other small maltooligosaccharides but is inactive against the polymeric substrate starch. AglA is not specific with respect to the configuration at the C-4 position of its substrates because glycosidic derivatives of D-galactose are also hydrolyzed. Does not cleave beta-glycosidic bonds. The polypeptide is Alpha-glucosidase (aglA) (Thermotoga maritima (strain ATCC 43589 / DSM 3109 / JCM 10099 / NBRC 100826 / MSB8)).